A 444-amino-acid polypeptide reads, in one-letter code: Cop9 signalosome complex subunit 11 (444 aa).

Residues 195–367 form the PCI domain; sequence FFTMMTSEPL…IHFEDSSILQ (173 aa). Residues 419 to 439 form a disordered region; sequence SSDDMDIDEVNDRSDISDSEG.

In terms of assembly, component of a COP9 signalosome-like (CSN) complex, composed of RRI1/CSN5, CSN9, RRI2/CSN10, PCI8/CSN11, CSN12 and CSI1. Interacts with PRT1 and RPG1, 2 subunits of the core complex of translation initiation factor 3 (eIF3).

It is found in the cytoplasm. The protein localises to the nucleus. Functionally, component of the COP9 signalosome (CSN) complex that acts as an regulator of the ubiquitin (Ubl) conjugation pathway by mediating the deneddylation of the cullin subunit of SCF-type E3 ubiquitin-protein ligase complexes The CSN complex is involved in the regulation of the mating pheromone response. PCI8 may also be involved in transcriptional and translational control. The chain is Cop9 signalosome complex subunit 11 (PCI8) from Saccharomyces cerevisiae (strain ATCC 204508 / S288c) (Baker's yeast).